We begin with the raw amino-acid sequence, 534 residues long: NAD(P)H-quinone oxidoreductase chain 4 (534 aa).

Helical transmembrane passes span phenylalanine 12–phenylalanine 32, phenylalanine 44–phenylalanine 64, isoleucine 94–tryptophan 114, proline 120–valine 140, leucine 144–tryptophan 164, phenylalanine 176–phenylalanine 196, isoleucine 220–histidine 240, threonine 251–leucine 271, phenylalanine 285–phenylalanine 305, isoleucine 314–serine 334, alanine 340–alanine 360, phenylalanine 384–valine 404, valine 425–methionine 445, and valine 472–valine 492.

This sequence belongs to the complex I subunit 4 family.

It is found in the cellular thylakoid membrane. It carries out the reaction a plastoquinone + NADH + (n+1) H(+)(in) = a plastoquinol + NAD(+) + n H(+)(out). It catalyses the reaction a plastoquinone + NADPH + (n+1) H(+)(in) = a plastoquinol + NADP(+) + n H(+)(out). Its function is as follows. NDH-1 shuttles electrons from NAD(P)H, via FMN and iron-sulfur (Fe-S) centers, to quinones in the respiratory chain. The immediate electron acceptor for the enzyme in this species is believed to be plastoquinone. Couples the redox reaction to proton translocation (for every two electrons transferred, four hydrogen ions are translocated across the cytoplasmic membrane), and thus conserves the redox energy in a proton gradient. The protein is NAD(P)H-quinone oxidoreductase chain 4 of Prochlorococcus marinus (strain MIT 9312).